Consider the following 106-residue polypeptide: Class II hydrophobin 6 (106 aa).

The first 16 residues, 1 to 16 (MQFFTVATLFLATAFA), serve as a signal peptide directing secretion. Intrachain disulfides connect cysteine 36–cysteine 86, cysteine 47–cysteine 77, cysteine 48–cysteine 60, and cysteine 87–cysteine 98.

It belongs to the cerato-ulmin hydrophobin family. In terms of assembly, homodimer. Homodimers further self-assemble to form highly ordered films at water-air interfaces through intermolecular interactions.

The protein resides in the secreted. Its subcellular location is the cell wall. Aerial growth, conidiation, and dispersal of filamentous fungi in the environment rely upon a capability of their secreting small amphipathic proteins called hydrophobins (HPBs) with low sequence identity. Class I can self-assemble into an outermost layer of rodlet bundles on aerial cell surfaces, conferring cellular hydrophobicity that supports fungal growth, development and dispersal; whereas Class II form highly ordered films at water-air interfaces through intermolecular interactions but contribute nothing to the rodlet structure. HFB2-6 is a class II hydrophobin that has a function in root colonization. Acts as an effector in poplar by up-regulating the expression of genes related to both the jasmonic acid and salicylic acid signal transduction pathways, which not only causes induced systemic resistance (ISR), but also systemic acquired resistance (SAR), giving poplar broad-spectrum resistance to pathogens. Also induces genes related to auxin signal transduction to promote poplar growth. Plays roles in interactions with both biotic and abiotic environmental conditions such as the presence of the pathogen Alternaria alternata or nutrient starvation conditions. The chain is Class II hydrophobin 6 from Trichoderma asperellum (strain ATCC 204424 / CBS 433.97 / NBRC 101777).